Consider the following 349-residue polypeptide: Histidinol-phosphate aminotransferase (349 aa).

Lys210 carries the N6-(pyridoxal phosphate)lysine modification.

The protein belongs to the class-II pyridoxal-phosphate-dependent aminotransferase family. Histidinol-phosphate aminotransferase subfamily. Homodimer. It depends on pyridoxal 5'-phosphate as a cofactor.

The catalysed reaction is L-histidinol phosphate + 2-oxoglutarate = 3-(imidazol-4-yl)-2-oxopropyl phosphate + L-glutamate. It participates in amino-acid biosynthesis; L-histidine biosynthesis; L-histidine from 5-phospho-alpha-D-ribose 1-diphosphate: step 7/9. The polypeptide is Histidinol-phosphate aminotransferase (Flavobacterium johnsoniae (strain ATCC 17061 / DSM 2064 / JCM 8514 / BCRC 14874 / CCUG 350202 / NBRC 14942 / NCIMB 11054 / UW101) (Cytophaga johnsonae)).